A 142-amino-acid polypeptide reads, in one-letter code: Large ribosomal subunit protein uL11 (142 aa).

It belongs to the universal ribosomal protein uL11 family. In terms of assembly, part of the ribosomal stalk of the 50S ribosomal subunit. Interacts with L10 and the large rRNA to form the base of the stalk. L10 forms an elongated spine to which L12 dimers bind in a sequential fashion forming a multimeric L10(L12)X complex. Post-translationally, one or more lysine residues are methylated.

Its function is as follows. Forms part of the ribosomal stalk which helps the ribosome interact with GTP-bound translation factors. The polypeptide is Large ribosomal subunit protein uL11 (Acinetobacter baumannii (strain AB307-0294)).